The following is a 314-amino-acid chain: Olfactory receptor 1E5 (314 aa).

The Extracellular portion of the chain corresponds to 1 to 25 (MMGQNQTSISDFLLLGLPIQPEQQN). A glycan (N-linked (GlcNAc...) asparagine) is linked at asparagine 5. The chain crosses the membrane as a helical span at residues 26–49 (LCYALFLAMYLTTLLGNLLIIVLI). The Cytoplasmic portion of the chain corresponds to 50 to 57 (RLDSHLHT). A helical membrane pass occupies residues 58-79 (PMYLFLSNLSFSDLCFSSVTIP). Topologically, residues 80–100 (KLLQNMQNQDPSIPYADCLTQ) are extracellular. A disulfide bridge links cysteine 97 with cysteine 189. The helical transmembrane segment at 101 to 120 (MYFFLLFGDLESFLLVAMAY) threads the bilayer. At 121–139 (DRYVAICFPLHYTAIMSPM) the chain is on the cytoplasmic side. The helical transmembrane segment at 140–158 (LCLSLVALSWVLTTFHAML) threads the bilayer. Over 159–196 (HTLLMARLCFCADNVIPHFFCDMSALLKLACSDTRVNE) the chain is Extracellular. Residues 197-219 (WVIFIMGGLIVVIPFLLILGSYA) form a helical membrane-spanning segment. Over 220–236 (RIVSSILKVPSSKGICK) the chain is Cytoplasmic. Residues 237–260 (AFSTCGSHLSVVSLFYGTIIGLYL) form a helical membrane-spanning segment. Residues 261–272 (CPSANSSTLKET) are Extracellular-facing. Asparagine 265 carries an N-linked (GlcNAc...) asparagine glycan. A helical transmembrane segment spans residues 273 to 292 (VMAMMYTVVTPMLNPFIYSL). Residues 293–314 (RNRDMKGALERVIXKRKNPFLL) are Cytoplasmic-facing.

Belongs to the G-protein coupled receptor 1 family.

The protein resides in the cell membrane. Functionally, odorant receptor. The polypeptide is Olfactory receptor 1E5 (OR1E5) (Pan troglodytes (Chimpanzee)).